The primary structure comprises 164 residues: MTIDNDLSRIAEQEKALSFDAFDLTTAWQLGKLLQELASERGLGIAIDVTLHSMPVFYAALPGVTPDNVNWVRRKRNMVLRYFRSSYASGLKLSKDGKTVEDNGLDGADYAPHGGSFPINVKGTGCIGAVTVSGLPQRDDHNLVVEALALMLAKDLDTLRLSPL.

This sequence belongs to the UPF0303 family.

The polypeptide is UPF0303 protein RHE_CH02903 (Rhizobium etli (strain ATCC 51251 / DSM 11541 / JCM 21823 / NBRC 15573 / CFN 42)).